We begin with the raw amino-acid sequence, 268 residues long: Indole-3-glycerol phosphate synthase (268 aa).

This sequence belongs to the TrpC family.

It carries out the reaction 1-(2-carboxyphenylamino)-1-deoxy-D-ribulose 5-phosphate + H(+) = (1S,2R)-1-C-(indol-3-yl)glycerol 3-phosphate + CO2 + H2O. It participates in amino-acid biosynthesis; L-tryptophan biosynthesis; L-tryptophan from chorismate: step 4/5. This Acinetobacter baumannii (strain AB0057) protein is Indole-3-glycerol phosphate synthase.